Reading from the N-terminus, the 260-residue chain is Transcription factor SUM-1 (260 aa).

One can recognise a bHLH domain in the interval 112-163 (DKRKAATLRERRRLRKVNEAFEALKRHTCANPNQRLPKVEILRNAIEYIEKL). The tract at residues 171-208 (KANGDSEMDSAETSSNTSDAMTDGSSPGSYSSDKAQQY) is disordered. Positions 181–205 (AETSSNTSDAMTDGSSPGSYSSDKA) are enriched in polar residues.

As to quaternary structure, efficient DNA binding requires dimerization with another bHLH protein. Homodimer, and heterodimer with the ubiquitous bHLH protein E12.

Its subcellular location is the nucleus. In terms of biological role, regulatory factor during embryogenesis. Conversion of pluripotent secondary mesenchyme cells to myogenic cells. It binds to the MCK enhancer element. The sequence is that of Transcription factor SUM-1 (SUM-1) from Lytechinus variegatus (Green sea urchin).